We begin with the raw amino-acid sequence, 174 residues long: Dual-action ribosomal maturation protein DarP (174 aa).

It belongs to the DarP family.

It localises to the cytoplasm. Its function is as follows. Member of a network of 50S ribosomal subunit biogenesis factors which assembles along the 30S-50S interface, preventing incorrect 23S rRNA structures from forming. Promotes peptidyl transferase center (PTC) maturation. This chain is Dual-action ribosomal maturation protein DarP, found in Pseudomonas aeruginosa (strain LESB58).